The following is a 503-amino-acid chain: D-xylose-proton symporter-like 2 (503 aa).

The span at Met-1–Ser-15 shows a compositional bias: polar residues. A disordered region spans residues Met-1–Leu-32. Ala-2 is modified (N-acetylalanine). The residue at position 26 (Ser-26) is a Phosphoserine. 12 consecutive transmembrane segments (helical) span residues Tyr-42 to Gly-62, Gly-99 to Gly-119, Leu-124 to Tyr-144, Val-146 to Pro-166, Phe-187 to His-207, Met-213 to Ala-233, Ala-305 to Leu-325, Val-346 to Asp-366, Leu-375 to Phe-395, Val-400 to Ile-420, Gly-437 to Ser-457, and Ile-467 to Val-487.

Belongs to the major facilitator superfamily. Sugar transporter (TC 2.A.1.1) family.

The protein localises to the membrane. The protein is D-xylose-proton symporter-like 2 of Arabidopsis thaliana (Mouse-ear cress).